Consider the following 757-residue polypeptide: Amine oxidase [copper-containing] 2 (757 aa).

Over Met-1–Lys-4 the chain is Cytoplasmic. The chain crosses the membrane as a helical span at residues Val-5 to Leu-25. The Extracellular segment spans residues Thr-26–Leu-757. Asn-133, Asn-198, and Asn-226 each carry an N-linked (GlcNAc...) asparagine glycan. The active-site Proton acceptor is the Asp-381. A disulfide bond links Cys-399 and Cys-425. Tyr-466 functions as the Schiff-base intermediate with substrate; via topaquinone in the catalytic mechanism. Tyr-466 carries the post-translational modification 2',4',5'-topaquinone. The Cu(2+) site is built by His-517 and His-519. 7 residues coordinate Ca(2+): Asp-526, Leu-527, Asp-528, Glu-569, Glu-638, Phe-660, and Asn-662. Asn-663 carries N-linked (GlcNAc...) asparagine glycosylation. Ca(2+) contacts are provided by Glu-664, Asp-670, and Leu-671. His-681 provides a ligand contact to Cu(2+). Cys-731 and Cys-738 are joined by a disulfide.

It belongs to the copper/topaquinone oxidase family. As to quaternary structure, homodimer; disulfide-linked. Probably forms heterodimers with AOC3. Cu(2+) is required as a cofactor. Ca(2+) serves as cofactor. The cofactor is L-topaquinone. Topaquinone (TPQ) is generated by copper-dependent autoxidation of a specific tyrosyl residue. Significantly much highly expressed in retina.

The protein localises to the cell membrane. The catalysed reaction is 2-phenylethylamine + O2 + H2O = 2-phenylacetaldehyde + H2O2 + NH4(+). It carries out the reaction tryptamine + O2 + H2O = indole-3-acetaldehyde + H2O2 + NH4(+). It catalyses the reaction tyramine + O2 + H2O = (4-hydroxyphenyl)acetaldehyde + H2O2 + NH4(+). In terms of biological role, catalyzes the oxidative deamination of primary amines to the corresponding aldehydes with the concomitant production of hydrogen peroxide and ammonia. Has a preference for 2-phenylethylamine, tryptamine and tyramine. Could also act on methylamine and benzylamine but much less efficiently. The polypeptide is Amine oxidase [copper-containing] 2 (Mus musculus (Mouse)).